The following is a 293-amino-acid chain: ATP phosphoribosyltransferase (293 aa).

The protein belongs to the ATP phosphoribosyltransferase family. Long subfamily. It depends on Mg(2+) as a cofactor.

It is found in the cytoplasm. It carries out the reaction 1-(5-phospho-beta-D-ribosyl)-ATP + diphosphate = 5-phospho-alpha-D-ribose 1-diphosphate + ATP. It functions in the pathway amino-acid biosynthesis; L-histidine biosynthesis; L-histidine from 5-phospho-alpha-D-ribose 1-diphosphate: step 1/9. Its activity is regulated as follows. Feedback inhibited by histidine. Its function is as follows. Catalyzes the condensation of ATP and 5-phosphoribose 1-diphosphate to form N'-(5'-phosphoribosyl)-ATP (PR-ATP). Has a crucial role in the pathway because the rate of histidine biosynthesis seems to be controlled primarily by regulation of HisG enzymatic activity. The sequence is that of ATP phosphoribosyltransferase from Solidesulfovibrio magneticus (strain ATCC 700980 / DSM 13731 / RS-1) (Desulfovibrio magneticus).